Consider the following 602-residue polypeptide: Sulfite reductase [NADPH] hemoprotein beta-component (602 aa).

The tract at residues 1 to 23 (MDDTKTASPAPARAYETPPAERP) is disordered. 4 residues coordinate [4Fe-4S] cluster: cysteine 458, cysteine 464, cysteine 503, and cysteine 507. Residue cysteine 507 coordinates siroheme.

It belongs to the nitrite and sulfite reductase 4Fe-4S domain family. As to quaternary structure, alpha(8)-beta(8). The alpha component is a flavoprotein, the beta component is a hemoprotein. Requires siroheme as cofactor. The cofactor is [4Fe-4S] cluster.

The catalysed reaction is hydrogen sulfide + 3 NADP(+) + 3 H2O = sulfite + 3 NADPH + 4 H(+). The protein operates within sulfur metabolism; hydrogen sulfide biosynthesis; hydrogen sulfide from sulfite (NADPH route): step 1/1. In terms of biological role, component of the sulfite reductase complex that catalyzes the 6-electron reduction of sulfite to sulfide. This is one of several activities required for the biosynthesis of L-cysteine from sulfate. The sequence is that of Sulfite reductase [NADPH] hemoprotein beta-component from Methylobacterium sp. (strain 4-46).